Consider the following 396-residue polypeptide: Adenosine 3'-phospho 5'-phosphosulfate transporter 2 (396 aa).

The segment at 22-42 (NGGESAGNSPPSQRKSSTSES) is disordered. The segment covering 27-42 (AGNSPPSQRKSSTSES) has biased composition (polar residues). Phosphoserine occurs at positions 37 and 40. An N-linked (GlcNAc...) asparagine glycan is attached at asparagine 57. Transmembrane regions (helical) follow at residues 66–86 (CAGV…IFTV), 91–111 (PYGW…GLVE), 140–160 (LILA…LGYL), 163–183 (PTQV…SILI), 189–209 (GLLD…FTLA), 216–236 (NFNL…AAIG), 253–273 (VVFY…LVTG), 290–310 (FGYG…VLAL), 318–338 (IAAT…FVLF), and 342–362 (FTLQ…LNVY).

This sequence belongs to the nucleotide-sugar transporter family. SLC35B subfamily.

The protein localises to the golgi apparatus membrane. Functionally, mediates the transport of adenosine 3'-phospho 5'-phosphosulfate (PAPS), from cytosol into Golgi. PAPS is a universal sulfuryl donor for sulfation events that take place in the Golgi. Essential for viability. Involved in glycosaminoglycan synthesis and the subsequent signaling. May be involved in hh and dpp signaling by controlling the sulfation of heparan sulfate (HS). In Drosophila melanogaster (Fruit fly), this protein is Adenosine 3'-phospho 5'-phosphosulfate transporter 2 (Papst2).